Reading from the N-terminus, the 609-residue chain is UvrABC system protein C (609 aa).

Positions 16–94 (SSAGVYRMYD…IKQYMPKYNV (79 aa)) constitute a GIY-YIG domain. The UVR domain occupies 203–238 (QQVISALVDKMELAAERQAYEQAARFRDQIMALRKV).

It belongs to the UvrC family. As to quaternary structure, interacts with UvrB in an incision complex.

The protein resides in the cytoplasm. Functionally, the UvrABC repair system catalyzes the recognition and processing of DNA lesions. UvrC both incises the 5' and 3' sides of the lesion. The N-terminal half is responsible for the 3' incision and the C-terminal half is responsible for the 5' incision. The sequence is that of UvrABC system protein C from Shewanella baltica (strain OS155 / ATCC BAA-1091).